The chain runs to 920 residues: Alpha-L-rhamnosidase (920 aa).

The first 19 residues, 1 to 19 (MCVVRTFWFAVLTVIFAVS), serve as a signal peptide directing secretion. A lipid anchor (N-palmitoyl cysteine) is attached at cysteine 20. Cysteine 20 carries the S-diacylglycerol cysteine lipid modification. Alpha-L-rhamnose contacts are provided by residues aspartate 500, 504–506 (RDE), aspartate 513, and tryptophan 565. Glutamate 506 functions as the Proton donor in the catalytic mechanism. The active-site Proton acceptor is glutamate 779. Histidine 800 contacts alpha-L-rhamnose.

The protein belongs to the glycosyl hydrolase 78 family.

The protein resides in the cell membrane. The enzyme catalyses Hydrolysis of terminal non-reducing alpha-L-rhamnose residues in alpha-L-rhamnosides.. Alpha-L-rhamnosidase involved in ulvan degradation. Ulvan is the main polysaccharide component of the Ulvales (green seaweed) cell wall. It is composed of disaccharide building blocks comprising 3-sulfated rhamnose (Rha3S) linked to D-glucuronic acid (GlcA), L-iduronic acid (IduA), or D-xylose (Xyl). The enzyme is able to degrade p-nitrophenyl-alpha-L-rhamnopyranoside (PNP-Rha) in vitro. Incubating the enzyme with the products obtained after degradation with ulvan lyase and beta-glucuronyl hydrolase (i.e. the trisaccharides beta-alpha-L-Rha3S-IduA-Rha3S and beta-alpha-L-Rha3S-GlcA-Rha3S) showed no degradation, suggesting that the enzyme is active on neutral rhamnose and that desulfation of the oligosaccharide must be achieved before cleavage of rhamnose. The sequence is that of Alpha-L-rhamnosidase from Alteromonas sp. (strain LOR).